The chain runs to 134 residues: Complexin-2 (134 aa).

The interval 1-114 (MDFVMKQALG…CGDEEEEEEE (114 aa)) is disordered. The span at 15–85 (DMGKMLGGEE…EEKEAEEKAA (71 aa)) shows a compositional bias: basic and acidic residues. Residues 28–84 (PDAQKKEEERQEALRQQEEERKAKHARMEAEREKVRQQIRDKYGLKKKEEKEAEEKA) adopt a coiled-coil conformation. The interaction with the SNARE complex stretch occupies residues 41 to 97 (LRQQEEERKAKHARMEAEREKVRQQIRDKYGLKKKEEKEAEEKAALEQPCEGSLTRP). Ser93 is subject to Phosphoserine.

This sequence belongs to the complexin/synaphin family. In terms of assembly, binds to the SNARE core complex containing SNAP25, VAMP2 and STX1A. As to expression, nervous system. Also present in adrenal chromaffin cells (at protein level).

It localises to the cytoplasm. The protein resides in the cytosol. It is found in the presynapse. Its subcellular location is the nucleus. The protein localises to the perikaryon. Its function is as follows. Negatively regulates the formation of synaptic vesicle clustering at active zone to the presynaptic membrane in postmitotic neurons. Positively regulates a late step in exocytosis of various cytoplasmic vesicles, such as synaptic vesicles and other secretory vesicles. Also involved in mast cell exocytosis. The protein is Complexin-2 (CPLX2) of Bos taurus (Bovine).